The chain runs to 305 residues: 2-aminophenol 1,6-dioxygenase beta subunit (305 aa).

Residues histidine 14, histidine 63, and histidine 196 each coordinate Fe cation.

Belongs to the LigB/MhpB extradiol dioxygenase family. In terms of assembly, heterotetramer of 2 alpha and 2 beta subunits. The cofactor is Fe(2+).

It catalyses the reaction 2-aminophenol + O2 = 2-aminomuconate 6-semialdehyde. With respect to regulation, strongly inhibited by CuSO(4), FeCl(3), K(3)[Fe(CN)(6)], AgNO3, HgCl(2) and MnCl(2). Functionally, component of the 2-aminophenol 1,6-dioxygenase complex that catalyzes the ring fission of 2-aminophenol to produce 2-aminomuconic 6-semialdehyde. AmnB seems to be the catalytic subunit of the complex. The enzyme is also active toward 2-amino-p-cresol, 6-amino-m-cresol, 2-amino-m-cresol, 2-amino-4,5-dimethylphenol, 2-amino-4-chlorophenol, and catechol. This Pseudomonas sp protein is 2-aminophenol 1,6-dioxygenase beta subunit (amnB).